We begin with the raw amino-acid sequence, 514 residues long: MGALLRALLLPLLAQWLLRAVPVLAPAPFTLPLQVAGAANHRASTVPGLGTPELPRADGLALALEPARATANFLAMVDNLQGDSGRGYYLEMLIGTPPQKVRILVDTGSSNFAVAGAPHSYIDTYFDSESSSTYHSKGFEVTVKYTQGSWTGFVGEDLVTIPKGFNSSFLVNIATIFESENFFLPGIKWNGILGLAYAALAKPSSSLETFFDSLVAQAKIPDIFSMQMCGAGLPVAGSGTNGGSLVLGGIEPSLYKGDIWYTPIKEEWYYQIEILKLEIGGQSLNLDCREYNADKAIVDSGTTLLRLPQKVFDAVVEAVARTSLIPEFSDGFWTGAQLACWTNSETPWAYFPKISIYLRDENASRSFRITILPQLYIQPMMGAGFNYECYRFGISSSTNALVIGATVMEGFYVVFDRAQRRVGFAVSPCAEIAGTTVSEISGPFSTEDIASNCVPAQALNEPILWIVSYALMSVCGAILLVLILLLLFPLHCRHAPRDPEVVNDESSLVRHRWK.

Residues 1–20 (MGALLRALLLPLLAQWLLRA) form the signal peptide. A propeptide spanning residues 21–62 (VPVLAPAPFTLPLQVAGAANHRASTVPGLGTPELPRADGLAL) is cleaved from the precursor. Over 21–469 (VPVLAPAPFT…NEPILWIVSY (449 aa)) the chain is Extracellular. The Peptidase A1 domain occupies 88-425 (YYLEMLIGTP…DRAQRRVGFA (338 aa)). Aspartate 106 is a catalytic residue. Asparagine 166 carries N-linked (GlcNAc...) asparagine glycosylation. 3 disulfide bridges follow: cysteine 229/cysteine 429, cysteine 288/cysteine 453, and cysteine 340/cysteine 389. Aspartate 299 is an active-site residue. N-linked (GlcNAc...) asparagine glycosylation occurs at asparagine 362. Residues 470 to 490 (ALMSVCGAILLVLILLLLFPL) form a helical membrane-spanning segment. The Cytoplasmic segment spans residues 491 to 514 (HCRHAPRDPEVVNDESSLVRHRWK).

Belongs to the peptidase A1 family. In terms of assembly, monomer. Interacts with RTN3 and RTN4. In terms of processing, undergoes autoproteolytic cleavage. Post-translationally, glycosylated.

It is found in the cell membrane. Its subcellular location is the golgi apparatus. It localises to the endoplasmic reticulum. The protein localises to the endosome. The protein resides in the melanosome. The enzyme catalyses Broad endopeptidase specificity. Cleaves Glu-Val-Asn-Leu-|-Asp-Ala-Glu-Phe in the Swedish variant of Alzheimer's amyloid precursor protein.. Responsible for the proteolytic processing of the amyloid precursor protein (APP). Cleaves APP, between residues 690 and 691, leading to the generation and extracellular release of beta-cleaved soluble APP, and a corresponding cell-associated C-terminal fragment which is later released by gamma-secretase. It has also been shown that it can cleave APP between residues 671 and 672. Involved in the proteolytic shedding of PMEL at early stages of melanosome biogenesis. Cleaves PMEL within the M-beta fragment to release the amyloidogenic PMEL luminal fragment containing M-alpha and a small portion of M-beta N-terminus. This is a prerequisite step for subsequent processing and assembly of PMEL fibrils into amyloid sheets. Responsible also for the proteolytic processing of CLTRN in pancreatic beta cells. The sequence is that of Beta-secretase 2 (Bace2) from Rattus norvegicus (Rat).